Here is a 923-residue protein sequence, read N- to C-terminus: Protocadherin gamma-B4 (923 aa).

Residues 1–30 form the signal peptide; sequence MGSGAGELGRAERLPVLFLFLLSLFCPALC. 6 Cadherin domains span residues 31–133, 134–242, 243–345, 346–450, 451–560, and 568–673; these read EQIR…TPKF, TQNS…APVF, SQDV…APEV, IFQS…APVF, SQSS…APRV, and DGSA…LPDI. Residues 31 to 689 are Extracellular-facing; that stretch reads EQIRYRIPEE…SDLQAELQFY (659 aa). Residues asparagine 417 and asparagine 543 are each glycosylated (N-linked (GlcNAc...) asparagine). A helical membrane pass occupies residues 690 to 710; it reads LVVALALISVLFLVAMILAIA. Residues 711 to 923 lie on the Cytoplasmic side of the membrane; that stretch reads LRLRRSSSPA…KKKSGKKEKK (213 aa). Disordered regions lie at residues 797-832 and 893-923; these read SHQQAPPNTDWRFSQAQRPGTSGSQNGDDTGTWPNN and ATLTNAAGKRDGKAPAGGNGNKKKSGKKEKK. Basic residues predominate over residues 913-923; sequence NKKKSGKKEKK.

The protein resides in the cell membrane. In terms of biological role, potential calcium-dependent cell-adhesion protein. May be involved in the establishment and maintenance of specific neuronal connections in the brain. The polypeptide is Protocadherin gamma-B4 (PCDHGB4) (Homo sapiens (Human)).